The chain runs to 273 residues: MVFYKYSGSGNDFLIVQSFKKKDFSNLAKQVCHRHEGFGADGLVVVLPSKDYDYEWDFYNSDGSKAGMCGNASRCVGLFAYQHAIASKNHVFLAGKREISICIEEPNIIESNLGNYKILDVIPALRCEKFFSSGSVLEHIPTFYLIDTGVPHLVGFVENKEGLNSLNTLELRALRHEFNANINIAFIENKETIFLQTYERGVEDFTLACGTGMAAVFIAARIFYNTPKKAALIPKSNESLELSLKNDGIFYKGAVRYIGMSVLGMRVFENGCF.

Residues N11 and N60 each contribute to the substrate site. The active-site Proton donor is C69. Substrate contacts are provided by residues 70–71 (GN), N181, and 199–200 (ER). Residue C209 is the Proton acceptor of the active site. 210–211 (GT) lines the substrate pocket.

This sequence belongs to the diaminopimelate epimerase family. As to quaternary structure, homodimer.

The protein localises to the cytoplasm. It catalyses the reaction (2S,6S)-2,6-diaminopimelate = meso-2,6-diaminopimelate. The protein operates within amino-acid biosynthesis; L-lysine biosynthesis via DAP pathway; DL-2,6-diaminopimelate from LL-2,6-diaminopimelate: step 1/1. In terms of biological role, catalyzes the stereoinversion of LL-2,6-diaminopimelate (L,L-DAP) to meso-diaminopimelate (meso-DAP), a precursor of L-lysine and an essential component of the bacterial peptidoglycan. The polypeptide is Diaminopimelate epimerase (Helicobacter pylori (strain ATCC 700392 / 26695) (Campylobacter pylori)).